We begin with the raw amino-acid sequence, 275 residues long: Elongation factor Ts (275 aa).

Positions 76–79 are involved in Mg(2+) ion dislocation from EF-Tu; the sequence is TDFV.

Belongs to the EF-Ts family.

The protein localises to the cytoplasm. Associates with the EF-Tu.GDP complex and induces the exchange of GDP to GTP. It remains bound to the aminoacyl-tRNA.EF-Tu.GTP complex up to the GTP hydrolysis stage on the ribosome. In Rhodococcus opacus (strain B4), this protein is Elongation factor Ts.